Consider the following 177-residue polypeptide: Large ribosomal subunit protein uL6 (177 aa).

Belongs to the universal ribosomal protein uL6 family. As to quaternary structure, part of the 50S ribosomal subunit.

Its function is as follows. This protein binds to the 23S rRNA, and is important in its secondary structure. It is located near the subunit interface in the base of the L7/L12 stalk, and near the tRNA binding site of the peptidyltransferase center. The polypeptide is Large ribosomal subunit protein uL6 (Erythrobacter litoralis (strain HTCC2594)).